A 375-amino-acid chain; its full sequence is Growth/differentiation factor 8 (375 aa).

The N-terminal stretch at 1–23 (MQKLQLCVYIYLFMLIVAGPVDL) is a signal peptide. Positions 24–266 (NENSEQKENV…VTDTPKRSRR (243 aa)) are excised as a propeptide. Asn71 carries an N-linked (GlcNAc...) asparagine glycan. 4 disulfide bridges follow: Cys272/Cys282, Cys281/Cys340, Cys309/Cys372, and Cys313/Cys374.

This sequence belongs to the TGF-beta family. As to quaternary structure, homodimer; disulfide-linked. Interacts with WFIKKN2, leading to inhibit its activity. Interacts with FSTL3. Synthesized as large precursor molecule that undergoes proteolytic cleavage to generate an N-terminal propeptide and a disulfide linked C-terminal dimer, which is the biologically active molecule. The circulating form consists of a latent complex of the C-terminal dimer and other proteins, including its propeptide, which maintain the C-terminal dimer in a latent, inactive state. Ligand activation requires additional cleavage of the prodomain by a tolloid-like metalloproteinase.

The protein localises to the secreted. Acts specifically as a negative regulator of skeletal muscle growth. In Papio hamadryas (Hamadryas baboon), this protein is Growth/differentiation factor 8 (MSTN).